Consider the following 440-residue polypeptide: Xylose isomerase (440 aa).

Residues His100 and Asp103 contribute to the active site. The Mg(2+) site is built by Glu231, Glu267, His270, Asp295, Asp306, Asp308, and Asp338.

This sequence belongs to the xylose isomerase family. Homotetramer. Requires Mg(2+) as cofactor.

Its subcellular location is the cytoplasm. It carries out the reaction alpha-D-xylose = alpha-D-xylulofuranose. This is Xylose isomerase from Burkholderia multivorans (strain ATCC 17616 / 249).